Reading from the N-terminus, the 144-residue chain is Large ribosomal subunit protein uL11 (144 aa).

Belongs to the universal ribosomal protein uL11 family. In terms of assembly, part of the ribosomal stalk of the 50S ribosomal subunit. Interacts with L10 and the large rRNA to form the base of the stalk. L10 forms an elongated spine to which L12 dimers bind in a sequential fashion forming a multimeric L10(L12)X complex. In terms of processing, one or more lysine residues are methylated.

Functionally, forms part of the ribosomal stalk which helps the ribosome interact with GTP-bound translation factors. The chain is Large ribosomal subunit protein uL11 from Neisseria meningitidis serogroup C (strain 053442).